Reading from the N-terminus, the 399-residue chain is S-adenosylmethionine synthase (399 aa).

Residue His-16 participates in ATP binding. Asp-18 is a Mg(2+) binding site. Position 44 (Glu-44) interacts with K(+). Positions 57 and 100 each coordinate L-methionine. The segment at 100–110 (QSSDIAQGVNE) is flexible loop. ATP-binding positions include 177–179 (DAK), 244–245 (RF), Asp-253, 259–260 (RK), Ala-276, and Lys-280. Asp-253 serves as a coordination point for L-methionine. An L-methionine-binding site is contributed by Lys-284.

Belongs to the AdoMet synthase family. In terms of assembly, homotetramer; dimer of dimers. Mg(2+) is required as a cofactor. K(+) serves as cofactor.

It localises to the cytoplasm. It carries out the reaction L-methionine + ATP + H2O = S-adenosyl-L-methionine + phosphate + diphosphate. It participates in amino-acid biosynthesis; S-adenosyl-L-methionine biosynthesis; S-adenosyl-L-methionine from L-methionine: step 1/1. Functionally, catalyzes the formation of S-adenosylmethionine (AdoMet) from methionine and ATP. The overall synthetic reaction is composed of two sequential steps, AdoMet formation and the subsequent tripolyphosphate hydrolysis which occurs prior to release of AdoMet from the enzyme. This is S-adenosylmethionine synthase from Lactococcus lactis subsp. lactis (strain IL1403) (Streptococcus lactis).